Reading from the N-terminus, the 409-residue chain is Lactadherin (409 aa).

2 EGF-like domains span residues 2–41 (SGDF…LICN) and 44–88 (EKGP…IHCE). 3 cysteine pairs are disulfide-bonded: cysteine 6–cysteine 17, cysteine 11–cysteine 29, and cysteine 31–cysteine 40. Asparagine 41 is a glycosylation site (N-linked (GlcNAc...) asparagine). 6 cysteine pairs are disulfide-bonded: cysteine 48–cysteine 59, cysteine 53–cysteine 76, cysteine 78–cysteine 87, cysteine 91–cysteine 247, cysteine 234–cysteine 238, and cysteine 252–cysteine 409. Residues 67–69 (RGD) carry the Cell attachment site motif. 2 consecutive F5/8 type C domains span residues 91–247 (CNAP…LLGC) and 252–409 (CAEP…LLGC). The N-linked (GlcNAc...) asparagine glycan is linked to asparagine 372.

In terms of tissue distribution, mammary epithelial cell surfaces and spermatozoan. Also present in testis, epididymis, uterus, adrenal gland, tonsil, muscle, heart, lymphatic gland, thymus and kidney but not spleen, liver, lung or brain.

The protein resides in the membrane. It localises to the secreted. It is found in the cytoplasmic vesicle. Its subcellular location is the secretory vesicle. The protein localises to the acrosome membrane. In terms of biological role, contributes to phagocytic removal of apoptotic cells in many tissues. Plays an important role in the maintenance of intestinal epithelial homeostasis and the promotion of mucosal healing. Promotes VEGF-dependent neovascularization. Specific ligand for the alpha-v/beta-3 and alpha-v/beta-5 receptors. Also binds to phosphatidylserine-enriched cell surfaces in a receptor-independent manner. Zona pellucida-binding protein which may play a role in gamete interaction. In Sus scrofa (Pig), this protein is Lactadherin (MFGE8).